Reading from the N-terminus, the 431-residue chain is RbAp48-related WD40 repeat-containing protein prw1 (431 aa).

WD repeat units lie at residues 127 to 159 (SHPESVCSAKLMPQDDSCVATVGNYHNDVLVFD), 182 to 213 (KHTQPCTSVCWNFLSKGTLVSGSQDATLSCWD), 232 to 263 (SHEKQVSDVRFHYKHQDLLASVSYDQYLHVHD), 279 to 310 (AHSGPIHSVAFNPHNDFILATCSTDKTIALWD), 323 to 354 (GHEDIVTKISFSPHEEPILASTSADRRTLVWD), and 380 to 411 (GHTSCTIDMDWCPNYNWTMATAAEDNILQIWT).

The protein belongs to the WD repeat HIR1 family. In terms of assembly, heterotetramer of alp13, clr6, prw1 and pst2.

Its subcellular location is the nucleus. Its function is as follows. Has a role in chromatin assembly and chromosome segregation. Involved in the deacetylation of histones. The polypeptide is RbAp48-related WD40 repeat-containing protein prw1 (prw1) (Schizosaccharomyces pombe (strain 972 / ATCC 24843) (Fission yeast)).